A 335-amino-acid polypeptide reads, in one-letter code: 2-acylglycerol O-acyltransferase 2 (335 aa).

A run of 2 helical transmembrane segments spans residues 24–44 and 104–124; these read WAVS…LLLF and YIMG…NFCT. N-linked (GlcNAc...) asparagine glycosylation is present at N206.

It belongs to the diacylglycerol acyltransferase family.

It localises to the endoplasmic reticulum membrane. The protein resides in the cytoplasm. Its subcellular location is the perinuclear region. The enzyme catalyses a 2-acylglycerol + an acyl-CoA = a 1,2-diacylglycerol + CoA. It carries out the reaction a 2-acylglycerol + an acyl-CoA = a 1,2-diacyl-sn-glycerol + CoA. It catalyses the reaction a 2-acylglycerol + an acyl-CoA = a 2,3-diacyl-sn-glycerol + CoA. The catalysed reaction is a 1-acylglycerol + an acyl-CoA = a 1,2-diacylglycerol + CoA. The enzyme catalyses a 1-acylglycerol + an acyl-CoA = a 1,3-diacylglycerol + CoA. It carries out the reaction 1-O-alkylglycerol + an acyl-CoA = 1-O-alkyl-3-acylglycerol + CoA. It catalyses the reaction an acyl-CoA + a 1,2-diacyl-sn-glycerol = a triacyl-sn-glycerol + CoA. It functions in the pathway glycerolipid metabolism; triacylglycerol biosynthesis. Involved in glycerolipid synthesis and lipid metabolism. Catalyzes the formation of diacylglycerol, the precursor of triacylglycerol, by transferring the acyl chain of a fatty acyl-CoA to a monoacylglycerol. Plays a central role in absorption of dietary fat in the small intestine by catalyzing the resynthesis of triacylglycerol in enterocytes. Has a preference toward monoacylglycerols containing unsaturated fatty acids in an order of C18:3 &gt; C18:2 &gt; C18:1 &gt; C18:0 at sn-2. Able to use 1-monoalkylglycerol (1-MAkG, 1-O-alkylglycerol) as an acyl acceptor for the synthesis of monoalkyl-monoacylglycerol (MAMAG, 1-O-alkyl-3-acylglycerol or 1-O-alkyl-2-acylglycerol) and subsequently, with lower efficiency, may add another acyl chain producing monoalkyl-diacylglycerol (MADAG, 1-O-alkyl-2,3-diacylglycerol). Possesses weak but significant activity with diacylglycerol as substrate, producing triacylglycerol (triacyl-sn-glycerol). The chain is 2-acylglycerol O-acyltransferase 2 (mogat2) from Xenopus tropicalis (Western clawed frog).